The chain runs to 325 residues: DNA-directed RNA polymerase subunit alpha (325 aa).

The alpha N-terminal domain (alpha-NTD) stretch occupies residues 1–231; it reads MQTSLLKPKI…DQLSVFAALE (231 aa). The alpha C-terminal domain (alpha-CTD) stretch occupies residues 246 to 325; that stretch reads IDPILLRPVD…ENWPPAGLDK (80 aa).

The protein belongs to the RNA polymerase alpha chain family. Homodimer. The RNAP catalytic core consists of 2 alpha, 1 beta, 1 beta' and 1 omega subunit. When a sigma factor is associated with the core the holoenzyme is formed, which can initiate transcription.

It carries out the reaction RNA(n) + a ribonucleoside 5'-triphosphate = RNA(n+1) + diphosphate. In terms of biological role, DNA-dependent RNA polymerase catalyzes the transcription of DNA into RNA using the four ribonucleoside triphosphates as substrates. This Burkholderia multivorans (strain ATCC 17616 / 249) protein is DNA-directed RNA polymerase subunit alpha.